The primary structure comprises 468 residues: PTS system mannitol-specific EIICB component (468 aa).

The Cytoplasmic portion of the chain corresponds to 1-25 (MNNQPSFRARVQKFGSFLSGMIMPN). The region spanning 14-344 (FGSFLSGMIM…ILKTSKATAE (331 aa)) is the PTS EIIC type-2 domain. A helical membrane pass occupies residues 26-47 (IGAFIAWGLITALFIPTGWWPN). Over 48 to 51 (EQLA) the chain is Extracellular. A helical membrane pass occupies residues 52 to 72 (ELVGPMITYLLPLLIGYTGGK). Residues 73–135 (MIYDVRGGVV…SGFEMLVNNF (63 aa)) lie on the Cytoplasmic side of the membrane. Residues 136–157 (SAGILAAILAIVAFLGIGPVVV) traverse the membrane as a helical segment. At 158–166 (SFSNVLASG) the chain is on the extracellular side. A helical membrane pass occupies residues 167-187 (VEVIIGAGLLPLASIFIEPAK). Topologically, residues 188 to 274 (VLFLNNAINH…ILMKPTLILA (87 aa)) are cytoplasmic. Residues 275–294 (VIAGGMSGVFTFVLFNAGLV) form a helical membrane-spanning segment. Residues 295–314 (AVPSPGSIFALLAMTPRGEY) lie on the Extracellular side of the membrane. The chain crosses the membrane as a helical span at residues 315–336 (AGVLAGVIIATVVSFVIASIIL). At 337–468 (KTSKATAEDL…YDELVNRLKS (132 aa)) the chain is on the cytoplasmic side. A PTS EIIB type-2 domain is found at 380–468 (NKIIFACDAG…YDELVNRLKS (89 aa)). The active-site Phosphocysteine intermediate; for EIIB activity is the Cys386. Position 386 is a phosphocysteine; by EIIA (Cys386).

Homodimer.

It is found in the cell membrane. The enzyme catalyses D-mannitol(out) + N(pros)-phospho-L-histidyl-[protein] = D-mannitol 1-phosphate(in) + L-histidyl-[protein]. The phosphoenolpyruvate-dependent sugar phosphotransferase system (sugar PTS), a major carbohydrate active transport system, catalyzes the phosphorylation of incoming sugar substrates concomitantly with their translocation across the cell membrane. The enzyme II CmtAB PTS system is involved in D-mannitol transport. This Halalkalibacterium halodurans (strain ATCC BAA-125 / DSM 18197 / FERM 7344 / JCM 9153 / C-125) (Bacillus halodurans) protein is PTS system mannitol-specific EIICB component (mtlA).